A 116-amino-acid chain; its full sequence is Ribonuclease P protein component (116 aa).

It belongs to the RnpA family. In terms of assembly, consists of a catalytic RNA component (M1 or rnpB) and a protein subunit.

It catalyses the reaction Endonucleolytic cleavage of RNA, removing 5'-extranucleotides from tRNA precursor.. In terms of biological role, RNaseP catalyzes the removal of the 5'-leader sequence from pre-tRNA to produce the mature 5'-terminus. It can also cleave other RNA substrates such as 4.5S RNA. The protein component plays an auxiliary but essential role in vivo by binding to the 5'-leader sequence and broadening the substrate specificity of the ribozyme. This is Ribonuclease P protein component from Lachnoclostridium phytofermentans (strain ATCC 700394 / DSM 18823 / ISDg) (Clostridium phytofermentans).